The chain runs to 62 residues: Photosystem II reaction center protein Z (62 aa).

2 helical membrane passes run 8-28 (ALAA…VAYA) and 41-61 (FLGS…NFLV).

Belongs to the PsbZ family. In terms of assembly, PSII is composed of 1 copy each of membrane proteins PsbA, PsbB, PsbC, PsbD, PsbE, PsbF, PsbH, PsbI, PsbJ, PsbK, PsbL, PsbM, PsbT, PsbX, PsbY, PsbZ, Psb30/Ycf12, peripheral proteins PsbO, CyanoQ (PsbQ), PsbU, PsbV and a large number of cofactors. It forms dimeric complexes.

The protein localises to the cellular thylakoid membrane. Functionally, may control the interaction of photosystem II (PSII) cores with the light-harvesting antenna, regulates electron flow through the 2 photosystem reaction centers. PSII is a light-driven water plastoquinone oxidoreductase, using light energy to abstract electrons from H(2)O, generating a proton gradient subsequently used for ATP formation. The polypeptide is Photosystem II reaction center protein Z (Cyanothece sp. (strain PCC 7425 / ATCC 29141)).